A 429-amino-acid polypeptide reads, in one-letter code: Integral membrane protein GPR137C (429 aa).

Over residues 1–17 (MRVSVPGPAAAAAPAAG) the composition is skewed to low complexity. The disordered stretch occupies residues 1–29 (MRVSVPGPAAAAAPAAGREPSTPGGGSGG). The Lumenal segment spans residues 1 to 48 (MRVSVPGPAAAAAPAAGREPSTPGGGSGGGGAVAAASGAAVPGSVQLA). Residues 49–69 (LSVLHALLYAALFAFAYLQLW) traverse the membrane as a helical segment. At 70-83 (RLLLYRERRLSYQS) the chain is on the cytoplasmic side. Residues 84–104 (LCLFLCLLWAALRTTLFSAAF) form a helical membrane-spanning segment. Residues 105–120 (SLSGSLPLLRPPAHLH) lie on the Lumenal side of the membrane. A helical membrane pass occupies residues 121-141 (FFPHWLLYCFPSCLQFSTLCL). The Cytoplasmic portion of the chain corresponds to 142-167 (LNLYLAEVICKVRCATELDRHKILLH). Residues 168-188 (LGFIMASLLFLVVNLTCAMLV) form a helical membrane-spanning segment. The Lumenal portion of the chain corresponds to 189 to 205 (HGDVPENQLKWTVFVRA). A helical transmembrane segment spans residues 206–226 (LINDSLFILCAISLVCYICKI). Topologically, residues 227–246 (TKMSSANVYLESKGMSLCQT) are cytoplasmic. The helical transmembrane segment at 247–267 (VVVGSVVILLYSSRACYNLVV) threads the bilayer. Topologically, residues 268-300 (VTISQDTLESPFNYGWDNLSDKAHVEDISGEEY) are lumenal. Residue asparagine 285 is glycosylated (N-linked (GlcNAc...) asparagine). The chain crosses the membrane as a helical span at residues 301–321 (IVFGMVLFLWEHVPAWSVVLF). Residues 322–429 (FRAQRLNQNL…HHSLYVTPQN (108 aa)) are Cytoplasmic-facing.

The protein belongs to the GPR137 family.

The protein resides in the lysosome membrane. Its function is as follows. Lysosomal integral membrane protein that may regulate MTORC1 complex translocation to lysosomes. This is Integral membrane protein GPR137C (GPR137C) from Homo sapiens (Human).